The chain runs to 674 residues: Anosmin-1 (674 aa).

The first 21 residues, 1–21, serve as a signal peptide directing secretion; that stretch reads MVRRAPGASLALLLWVTAVSC. Cystine bridges form between cysteine 47–cysteine 71, cysteine 80–cysteine 99, cysteine 84–cysteine 95, and cysteine 110–cysteine 114. Residue asparagine 65 is glycosylated (N-linked (GlcNAc...) asparagine). One can recognise a WAP domain in the interval 121 to 170; it reads LSVKQGDCPAPEKASGFAAACFESCEADSECSGVKKCCSNGCGHTCQVPK. Fibronectin type-III domains are found at residues 180 to 281, 286 to 392, 418 to 515, and 545 to 652; these read PRKE…SKDP, APSN…TTQD, RRKP…FFVT, and KPEN…DLPP. Asparagine 203 and asparagine 294 each carry an N-linked (GlcNAc...) asparagine glycan. Over residues 388-402 the composition is skewed to polar residues; sequence STTQDNRNNNEQTSV. Positions 388-413 are disordered; sequence STTQDNRNNNEQTSVEKPPKGVVDPY. 3 N-linked (GlcNAc...) asparagine glycosylation sites follow: asparagine 465, asparagine 548, and asparagine 559. The interval 655–674 is disordered; the sequence is PHRPHLKHHPHRYKPPPEKY. Positions 656–668 are enriched in basic residues; sequence HRPHLKHHPHRYK.

The protein localises to the cell surface. Its function is as follows. May be an adhesion-like molecule with anti-protease activity. The protein is Anosmin-1 of Coturnix japonica (Japanese quail).